We begin with the raw amino-acid sequence, 255 residues long: Acetylglutamate kinase (255 aa).

Substrate contacts are provided by residues 40-41 (GG), R62, and N157.

The protein belongs to the acetylglutamate kinase family. ArgB subfamily.

The protein resides in the cytoplasm. The enzyme catalyses N-acetyl-L-glutamate + ATP = N-acetyl-L-glutamyl 5-phosphate + ADP. Its pathway is amino-acid biosynthesis; L-arginine biosynthesis; N(2)-acetyl-L-ornithine from L-glutamate: step 2/4. In terms of biological role, catalyzes the ATP-dependent phosphorylation of N-acetyl-L-glutamate. In Parabacteroides distasonis (strain ATCC 8503 / DSM 20701 / CIP 104284 / JCM 5825 / NCTC 11152), this protein is Acetylglutamate kinase.